A 317-amino-acid chain; its full sequence is Signal recognition particle receptor FtsY (317 aa).

GTP-binding positions include 117 to 124, 199 to 203, and 263 to 266; these read GVNGVGKT, DTAGR, and TKLD.

Belongs to the GTP-binding SRP family. FtsY subfamily. Part of the signal recognition particle protein translocation system, which is composed of SRP and FtsY.

It localises to the cell membrane. Its subcellular location is the cytoplasm. It carries out the reaction GTP + H2O = GDP + phosphate + H(+). In terms of biological role, involved in targeting and insertion of nascent membrane proteins into the cytoplasmic membrane. Acts as a receptor for the complex formed by the signal recognition particle (SRP) and the ribosome-nascent chain (RNC). The polypeptide is Signal recognition particle receptor FtsY (Deinococcus radiodurans (strain ATCC 13939 / DSM 20539 / JCM 16871 / CCUG 27074 / LMG 4051 / NBRC 15346 / NCIMB 9279 / VKM B-1422 / R1)).